The sequence spans 66 residues: Small ribosomal subunit protein bS21 (66 aa).

This sequence belongs to the bacterial ribosomal protein bS21 family.

In Rickettsia felis (strain ATCC VR-1525 / URRWXCal2) (Rickettsia azadi), this protein is Small ribosomal subunit protein bS21.